We begin with the raw amino-acid sequence, 943 residues long: Protein translocase subunit SecA (943 aa).

Residues Gln-90, 108-112, and Asp-509 each bind ATP; that span reads GEGKT. Residues 534–561 form a disordered region; sequence KPDNEHKPPIPQQRNSKSGGGFSANVDS.

The protein belongs to the SecA family. Monomer and homodimer. Part of the essential Sec protein translocation apparatus which comprises SecA, SecYEG and auxiliary proteins SecDF. Other proteins may also be involved.

It is found in the cell inner membrane. It localises to the cellular thylakoid membrane. Its subcellular location is the cytoplasm. The enzyme catalyses ATP + H2O + cellular proteinSide 1 = ADP + phosphate + cellular proteinSide 2.. Its function is as follows. Part of the Sec protein translocase complex. Interacts with the SecYEG preprotein conducting channel. Has a central role in coupling the hydrolysis of ATP to the transfer of proteins into and across the cell membrane, serving as an ATP-driven molecular motor driving the stepwise translocation of polypeptide chains across the membrane. Functionally, probably participates in protein translocation into and across both the cytoplasmic and thylakoid membranes in cyanobacterial cells. The polypeptide is Protein translocase subunit SecA (Prochlorococcus marinus subsp. pastoris (strain CCMP1986 / NIES-2087 / MED4)).